Reading from the N-terminus, the 148-residue chain is MYVHSVIGNIEAKTPTKTIEWIELDWDELNKRILRKTTDHGREVAIVMEEQGLTFGDILYEGEDVAIAVRTKLEPAFVIRPKTMKEMGKTAFELGNRHTPCLVENDEIYVRYDSTLAALFNEIGVNYEQTEKRFKQPFKYKGHHHHHD.

This sequence belongs to the UreE family.

The protein localises to the cytoplasm. Involved in urease metallocenter assembly. Binds nickel. Probably functions as a nickel donor during metallocenter assembly. This is Urease accessory protein UreE from Halalkalibacterium halodurans (strain ATCC BAA-125 / DSM 18197 / FERM 7344 / JCM 9153 / C-125) (Bacillus halodurans).